The following is a 933-amino-acid chain: Protein translocase subunit SecA (933 aa).

ATP is bound by residues glutamine 90, 108–112 (GEGKT), and aspartate 504. Residues 539–570 (GMGSNNRRPQGFGQDSKKKKWQPSADIFPTDL) form a disordered region.

Belongs to the SecA family. Monomer and homodimer. Part of the essential Sec protein translocation apparatus which comprises SecA, SecYEG and auxiliary proteins SecDF. Other proteins may also be involved.

The protein resides in the cell inner membrane. Its subcellular location is the cellular thylakoid membrane. The protein localises to the cytoplasm. The enzyme catalyses ATP + H2O + cellular proteinSide 1 = ADP + phosphate + cellular proteinSide 2.. In terms of biological role, part of the Sec protein translocase complex. Interacts with the SecYEG preprotein conducting channel. Has a central role in coupling the hydrolysis of ATP to the transfer of proteins into and across the cell membrane, serving as an ATP-driven molecular motor driving the stepwise translocation of polypeptide chains across the membrane. Its function is as follows. Probably participates in protein translocation into and across both the cytoplasmic and thylakoid membranes in cyanobacterial cells. The protein is Protein translocase subunit SecA of Crocosphaera subtropica (strain ATCC 51142 / BH68) (Cyanothece sp. (strain ATCC 51142)).